The following is a 337-amino-acid chain: Phosphate acyltransferase (337 aa).

It belongs to the PlsX family. In terms of assembly, homodimer. Probably interacts with PlsY.

Its subcellular location is the cytoplasm. The catalysed reaction is a fatty acyl-[ACP] + phosphate = an acyl phosphate + holo-[ACP]. It participates in lipid metabolism; phospholipid metabolism. In terms of biological role, catalyzes the reversible formation of acyl-phosphate (acyl-PO(4)) from acyl-[acyl-carrier-protein] (acyl-ACP). This enzyme utilizes acyl-ACP as fatty acyl donor, but not acyl-CoA. This Polynucleobacter asymbioticus (strain DSM 18221 / CIP 109841 / QLW-P1DMWA-1) (Polynucleobacter necessarius subsp. asymbioticus) protein is Phosphate acyltransferase.